The sequence spans 482 residues: Glycogen synthase (482 aa).

Residue K20 coordinates ADP-alpha-D-glucose.

It belongs to the glycosyltransferase 1 family. Bacterial/plant glycogen synthase subfamily.

The enzyme catalyses [(1-&gt;4)-alpha-D-glucosyl](n) + ADP-alpha-D-glucose = [(1-&gt;4)-alpha-D-glucosyl](n+1) + ADP + H(+). It participates in glycan biosynthesis; glycogen biosynthesis. Functionally, synthesizes alpha-1,4-glucan chains using ADP-glucose. The chain is Glycogen synthase from Aliivibrio salmonicida (strain LFI1238) (Vibrio salmonicida (strain LFI1238)).